The chain runs to 454 residues: Chromosomal replication initiator protein DnaA (454 aa).

The domain I, interacts with DnaA modulators stretch occupies residues 1 to 71 (MTKEQWGQLQ…HEVRQEDPAV (71 aa)). Residues 71 to 112 (VRRLRFAVPSHVNATTKPARPAQATAPRAPAEKTPRSTLSTA) are domain II. Positions 82–108 (VNATTKPARPAQATAPRAPAEKTPRST) are disordered. The segment covering 84 to 99 (ATTKPARPAQATAPRA) has biased composition (low complexity). The interval 113–334 (PLDARFTFDN…GALTRLCAFA (222 aa)) is domain III, AAA+ region. Glycine 157, glycine 159, lysine 160, and threonine 161 together coordinate ATP. The interval 335–454 (SLVGREIDME…LELLRRALEE (120 aa)) is domain IV, binds dsDNA.

It belongs to the DnaA family. In terms of assembly, oligomerizes as a right-handed, spiral filament on DNA at oriC.

It is found in the cytoplasm. Plays an essential role in the initiation and regulation of chromosomal replication. ATP-DnaA binds to the origin of replication (oriC) to initiate formation of the DNA replication initiation complex once per cell cycle. Binds the DnaA box (a 9 base pair repeat at the origin) and separates the double-stranded (ds)DNA. Forms a right-handed helical filament on oriC DNA; dsDNA binds to the exterior of the filament while single-stranded (ss)DNA is stabiized in the filament's interior. The ATP-DnaA-oriC complex binds and stabilizes one strand of the AT-rich DNA unwinding element (DUE), permitting loading of DNA polymerase. After initiation quickly degrades to an ADP-DnaA complex that is not apt for DNA replication. Binds acidic phospholipids. The chain is Chromosomal replication initiator protein DnaA from Roseobacter denitrificans (strain ATCC 33942 / OCh 114) (Erythrobacter sp. (strain OCh 114)).